The chain runs to 81 residues: Conotoxin ArMKLT2-01 (81 aa).

The signal sequence occupies residues 1-19; the sequence is MKLTCVIIVVALFLTACHA. Positions 20–43 are excised as a propeptide; sequence KDKQEHPAVRGSDDMQDSEDLKLA. 3 disulfide bridges follow: cysteine 46–cysteine 61, cysteine 53–cysteine 65, and cysteine 60–cysteine 74.

It belongs to the conotoxin O1 superfamily. In terms of tissue distribution, expressed by the venom duct.

The protein localises to the secreted. This Conus arenatus (Sand-dusted cone) protein is Conotoxin ArMKLT2-01.